A 378-amino-acid chain; its full sequence is UPF0754 membrane protein BCAH187_A1042 (378 aa).

2 consecutive transmembrane segments (helical) span residues 1-21 (MNIW…GGFT) and 357-377 (YLGA…LLFL).

This sequence belongs to the UPF0754 family.

It localises to the cell membrane. The polypeptide is UPF0754 membrane protein BCAH187_A1042 (Bacillus cereus (strain AH187)).